Consider the following 613-residue polypeptide: Protein CER1-like 2 (613 aa).

6 helical membrane passes run 13 to 33 (WTPLGSFKYLLLAPLVFDSIY), 44 to 64 (LLIVAVTVWRIVHSQIWISLS), 95 to 115 (IIFNTLIVYLTKVYVSGTSTI), 122 to 142 (GVILVALLHAGPVEFIYYWFH), 182 to 202 (LILGLPLITTFMCGTVSVVSI), and 322 to 342 (YLFLMKPFALILSFILRSFSF). One can recognise a Fatty acid hydroxylase domain in the interval 134–268 (VEFIYYWFHR…MPMYDYIYGT (135 aa)).

Belongs to the sterol desaturase family. As to expression, not detected in any tissues.

The protein localises to the membrane. This is Protein CER1-like 2 from Arabidopsis thaliana (Mouse-ear cress).